A 345-amino-acid chain; its full sequence is Phosphoribosylformylglycinamidine cyclo-ligase (345 aa).

It belongs to the AIR synthase family.

It localises to the cytoplasm. The enzyme catalyses 2-formamido-N(1)-(5-O-phospho-beta-D-ribosyl)acetamidine + ATP = 5-amino-1-(5-phospho-beta-D-ribosyl)imidazole + ADP + phosphate + H(+). Its pathway is purine metabolism; IMP biosynthesis via de novo pathway; 5-amino-1-(5-phospho-D-ribosyl)imidazole from N(2)-formyl-N(1)-(5-phospho-D-ribosyl)glycinamide: step 2/2. This is Phosphoribosylformylglycinamidine cyclo-ligase from Synechococcus sp. (strain CC9902).